We begin with the raw amino-acid sequence, 147 residues long: Large ribosomal subunit protein uL15 (147 aa).

Positions 1–13 are enriched in basic and acidic residues; the sequence is MELHSLKAAEGSR. The interval 1–57 is disordered; the sequence is MELHSLKAAEGSRKVRNRVGRGTSSGNGKTSGRGQKGQKSRSGGGVRPGFEGGQTEL. 2 stretches are compositionally biased toward gly residues: residues 23 to 35 and 42 to 52; these read TSSG…GRGQ and SGGGVRPGFEG.

It belongs to the universal ribosomal protein uL15 family. Part of the 50S ribosomal subunit.

Functionally, binds to the 23S rRNA. This is Large ribosomal subunit protein uL15 from Lactococcus lactis subsp. lactis (strain IL1403) (Streptococcus lactis).